The primary structure comprises 343 residues: 3-dehydroquinate synthase (343 aa).

NAD(+) is bound by residues 61 to 66 (SGEKYK), 95 to 96 (GV), 119 to 120 (TT), lysine 132, lysine 141, asparagine 142, and 159 to 162 (FLKT). Zn(2+) is bound by residues glutamate 174, histidine 231, and histidine 248.

The protein belongs to the sugar phosphate cyclases superfamily. Dehydroquinate synthase family. Homodimer. NAD(+) serves as cofactor. Co(2+) is required as a cofactor. Requires Zn(2+) as cofactor.

It is found in the cytoplasm. It carries out the reaction 7-phospho-2-dehydro-3-deoxy-D-arabino-heptonate = 3-dehydroquinate + phosphate. The protein operates within metabolic intermediate biosynthesis; chorismate biosynthesis; chorismate from D-erythrose 4-phosphate and phosphoenolpyruvate: step 2/7. Catalyzes the conversion of 3-deoxy-D-arabino-heptulosonate 7-phosphate (DAHP) to dehydroquinate (DHQ). This is 3-dehydroquinate synthase from Helicobacter pylori (strain ATCC 700392 / 26695) (Campylobacter pylori).